Consider the following 461-residue polypeptide: Photosystem II CP43 reaction center protein (461 aa).

The propeptide occupies 1–2 (ME). T3 is subject to N-acetylthreonine. T3 bears the Phosphothreonine mark. Transmembrane regions (helical) follow at residues 57–81 (LFEV…PHLA), 122–143 (LLGP…KDRN), 166–188 (KALY…RKIT), 243–263 (KPFA…LSYS), and 279–300 (WFNN…ASQA). E355 provides a ligand contact to [CaMn4O5] cluster. A helical membrane pass occupies residues 435–459 (RARAAAAGFEKGIDRDFEPVLSMTP).

Belongs to the PsbB/PsbC family. PsbC subfamily. In terms of assembly, PSII is composed of 1 copy each of membrane proteins PsbA, PsbB, PsbC, PsbD, PsbE, PsbF, PsbH, PsbI, PsbJ, PsbK, PsbL, PsbM, PsbT, PsbX, PsbY, PsbZ, Psb30/Ycf12, at least 3 peripheral proteins of the oxygen-evolving complex and a large number of cofactors. It forms dimeric complexes. Binds multiple chlorophylls and provides some of the ligands for the Ca-4Mn-5O cluster of the oxygen-evolving complex. It may also provide a ligand for a Cl- that is required for oxygen evolution. PSII binds additional chlorophylls, carotenoids and specific lipids. is required as a cofactor.

It localises to the plastid. The protein localises to the chloroplast thylakoid membrane. Its function is as follows. One of the components of the core complex of photosystem II (PSII). It binds chlorophyll and helps catalyze the primary light-induced photochemical processes of PSII. PSII is a light-driven water:plastoquinone oxidoreductase, using light energy to abstract electrons from H(2)O, generating O(2) and a proton gradient subsequently used for ATP formation. In Platanus occidentalis (Sycamore), this protein is Photosystem II CP43 reaction center protein.